The sequence spans 2053 residues: MDRGKGSGSNRSQKKVPLGGELFALGKSVRDDSKSKILPIKGMSSSDRKREASTALASSSKRFRGNLKDAGAPDMSSGSSQCETWEQFAVDCDLDTVVETIYAALEQNDSETVGRLVCGVIKQTTTSSSRSKVDNIALLALIYVAKVQPSIFCTDIVACALLSFLRREANVKMRYNTNLHILFANLLTRGFMEISQWPEVLLRIYIDDAVNERYWADNELCAPLVKNICAAFKTRTPHISLLRWDVSSSLPSGQAHRDSMTVDDDSGDNSTQSLDASPLNTESEPIPDAMCTTKSRFSDAVVQKHVSDAIRDQLNKRQQQDNYTRNFLKFLCTTSGIAEVRCLSISRLELWIHNGKLVKFAQQLLSYICFNIKGRNTQDNEVLLVLVKMRLKTKPLINHYMSCLKEMIFLQPEILSTVMKLVVQNELSNTRNPNNMGMLATMFQTSADQSAATLAEIYQEFLLQRDDCLRTLRVFLRELVRMLRFDVNLVKFCKTFLSEREDLTPQIEMFEFKERIFNSMVDIVCLCMFLSATPQAREASLSLKTNRDTKNNHALLKLYNQMSQIQLDTVSWMYETVPTLFKIPAAEYHQALHKLLLLDSPEQYSRCDQWPSEPERGAILRIISETPIHEETLLRIILIGITKDIPFSIANTFDVLLLVIKRVSGMKATNIPAVQANKFDIIDFLFSMSEYHHPENIRLPAEYEPPKLAIIAFYWKAWLILLMISAHNPSSFGAFCWDHYPTMKMMMEICITNQFNNSSATKDELQIITMERDHILQFETYLAAQTSPHAVITEETAILITQLMLMDPMGTPRKVPSMVLDQLKFLNQTYKLGHLFCRCRKPDLLLDIIQRQGTTQSMPWLSDLVQNSEGDFSHLPVQCLCEFLLFNAHIINEENSRDAELVNFLRNLIFDGNLSHQIVCELLDYIFRRLSSTVKQSRVAALSGLKIIFRHSGDFENEWLLKSLQQIPHFYEVKPFIIPQLRAACQVENCPELIMAYIQFITAHTLNDPVNEMLDHVIDMAQLIVERSTMFQHIIISQEDYDYVPDENRIQTLKCLFVMFNNYIIKLREYHEPYEWTEYPDLLMVQFDDGVQLPLHINIIHAFIILLTYSNSNMPESIPILDYWFPPGRPAPVAFLPSMPQEQVQLLPDWLKLKMIRSSVDRLIEAALNDLTPDQIVLFVQNFGTPVNSMSKLLAMLDTAVLEQFDLVKNAILNKAYLAQLIEIQQARGAKNGHYTVQALDLHSHSQTVPDLPKISVVIQEAVEIDDYDSSDSDDRPTNFLATKEVAQTILTQPDQLTESRSDCRSLIQKLLDMLASPNSNRADVVNAITEVLAVGCSVTMSRHACTFLRTFFSCMLHSDKYHILENALQKNLSMFKHTFADSSLLQKSELYHESLVFMLRNSREIYAQQFKANTALVARKRIVRAIVQSFDQTKDSKTVAKSKSDQLFHNGLFIDWLSEMDPEIVSTQLMKERFLFSKSCSEFRFYLLSLINHQTNWDTIERIAEYLFKNFHEDYDYATVLNYFEALTTNPKLWKGRDKYMSKNVRPDAFFMLRTSELEPFSHFILHEGLSEVKLDSKNYDFKLCSRMNLLFKLTEKRRDLMVKVMEHVEKSSVSDYLKLQVLQQMYIMYPRIKFLKPGKTGEQAYKLQNLKGCQADKVSNNLITCLGSLVGKKDFETLSTDTELLLRKLAASHPLLFLRQLGVLSSIMQGRAQLSMKALREEHHFHRFVQILRTLELLQPTIFEEAYKNEIQNTLSCYFNFFKHHSNVKEACQMLNKFVQMLQAYINYNPSSALLFIEQYVGILKELAAKYTSLGKLQVLVQAVALLQHKSHSATELDDEEVKYEYDLDEHFDVKPSASKPVVTEDPIEVNPQTPIDPSSSRGPLSVLTLGSYSRSNYTDISPHFLDLVKIIKQSNTEDVVLGPMQELECLTSKRFVFINELFERLLNLIFSPSAQIRSIAFIILIRHLKHNPGNSDINLCTLNAYIQCLRDENSSVAATAIDNLPEMSVLLQEHAIDILTVAFSLGLKSCLNTGHQIRKVLQTLVIQHGY.

Disordered regions lie at residues lysine 36–serine 58 and serine 249–proline 285. Polar residues predominate over residues aspartate 268 to serine 283. The helical transmembrane segment at leucine 708–asparagine 728 threads the bilayer.

This sequence belongs to the Integrator subunit 1 family. In terms of assembly, belongs to the multiprotein complex Integrator, at least composed of IntS1, IntS2, IntS3, IntS4, omd/IntS5, IntS6, defl/IntS7, IntS8, IntS9, IntS10, IntS11, IntS12, asun/IntS13, IntS14 and IntS15. The core complex associates with protein phosphatase 2A subunits mts/PP2A and Pp2A-29B, to form the Integrator-PP2A (INTAC) complex. Within the complex, interacts with IntS12 and IntS9. Interaction with IntS12 is likely to be important for promoting 3'-end processing of snRNAs. Interacts with Mediator complex members Cdk8 and CycC.

The protein localises to the nucleus membrane. Its subcellular location is the nucleus. Component of the integrator complex, a multiprotein complex that terminates RNA polymerase II (Pol II) transcription in the promoter-proximal region of genes. The integrator complex provides a quality checkpoint during transcription elongation by driving premature transcription termination of transcripts that are unfavorably configured for transcriptional elongation: the complex terminates transcription by (1) catalyzing dephosphorylation of the C-terminal domain (CTD) of Pol II subunit Polr2A/Rbp1 and Spt5, and (2) degrading the exiting nascent RNA transcript via endonuclease activity. The integrator complex is also involved in the 3'-end processing of the U7 snRNA, and also the spliceosomal snRNAs U1, U2, U4 and U5. Required for the normal expression of the Integrator complex component IntS12. The polypeptide is Integrator complex subunit 1 (Drosophila melanogaster (Fruit fly)).